Here is a 146-residue protein sequence, read N- to C-terminus: Holo-[acyl-carrier-protein] synthase (146 aa).

2 residues coordinate Mg(2+): D8 and E61.

It belongs to the P-Pant transferase superfamily. AcpS family. Requires Mg(2+) as cofactor.

The protein localises to the cytoplasm. It carries out the reaction apo-[ACP] + CoA = holo-[ACP] + adenosine 3',5'-bisphosphate + H(+). Transfers the 4'-phosphopantetheine moiety from coenzyme A to a Ser of acyl-carrier-protein. The sequence is that of Holo-[acyl-carrier-protein] synthase from Rhodopseudomonas palustris (strain TIE-1).